A 124-amino-acid polypeptide reads, in one-letter code: Small ribosomal subunit protein uS12 (124 aa).

The disordered stretch occupies residues 1–32 (MPTIQQLVRKGRQAKASKTKTPALKGSPQRRG). Residues 9–18 (RKGRQAKASK) show a composition bias toward basic residues. Residue D89 is modified to 3-methylthioaspartic acid.

This sequence belongs to the universal ribosomal protein uS12 family. As to quaternary structure, part of the 30S ribosomal subunit. Contacts proteins S8 and S17. May interact with IF1 in the 30S initiation complex.

Its function is as follows. With S4 and S5 plays an important role in translational accuracy. Functionally, interacts with and stabilizes bases of the 16S rRNA that are involved in tRNA selection in the A site and with the mRNA backbone. Located at the interface of the 30S and 50S subunits, it traverses the body of the 30S subunit contacting proteins on the other side and probably holding the rRNA structure together. The combined cluster of proteins S8, S12 and S17 appears to hold together the shoulder and platform of the 30S subunit. The chain is Small ribosomal subunit protein uS12 from Acidothermus cellulolyticus (strain ATCC 43068 / DSM 8971 / 11B).